Consider the following 649-residue polypeptide: Replication factor C small subunit (649 aa).

ATP is bound at residue 55-385; that stretch reads GPAGVGKCVT…GCIPTVMHNT (331 aa).

Belongs to the activator 1 small subunits family. RfcS subfamily. In terms of assembly, heteromultimer composed of small subunits (RfcS) and large subunits (RfcL). Post-translationally, this protein undergoes a protein self splicing that involves a post-translational excision of the intervening region (intein) followed by peptide ligation.

Functionally, part of the RFC clamp loader complex which loads the PCNA sliding clamp onto DNA. The polypeptide is Replication factor C small subunit (rfcS) (Haloquadratum walsbyi (strain DSM 16790 / HBSQ001)).